The primary structure comprises 128 residues: NADH-ubiquinone oxidoreductase chain 3 (128 aa).

A run of 3 helical transmembrane segments spans residues 4–24 (FIIF…VNIL), 50–70 (LAFN…DLEI), and 86–106 (YGFT…VYEI).

The protein belongs to the complex I subunit 3 family. Complex I is composed of 37 different subunits.

Its subcellular location is the mitochondrion membrane. The enzyme catalyses a ubiquinone + NADH + 5 H(+)(in) = a ubiquinol + NAD(+) + 4 H(+)(out). Core subunit of the mitochondrial membrane respiratory chain NADH dehydrogenase (Complex I) that is believed to belong to the minimal assembly required for catalysis. Complex I functions in the transfer of electrons from NADH to the respiratory chain. The immediate electron acceptor for the enzyme is believed to be ubiquinone. The chain is NADH-ubiquinone oxidoreductase chain 3 (ND3) from Yarrowia lipolytica (strain CLIB 122 / E 150) (Yeast).